Consider the following 410-residue polypeptide: LL-diaminopimelate aminotransferase (410 aa).

2 residues coordinate substrate: tyrosine 15 and glycine 42. Pyridoxal 5'-phosphate contacts are provided by residues tyrosine 72, 108-109 (SK), tyrosine 132, asparagine 187, tyrosine 218, and 246-248 (SFS). Residues lysine 109, tyrosine 132, and asparagine 187 each coordinate substrate. Position 249 is an N6-(pyridoxal phosphate)lysine (lysine 249). Residues arginine 257 and asparagine 292 each contribute to the pyridoxal 5'-phosphate site. Substrate contacts are provided by asparagine 292 and arginine 388.

It belongs to the class-I pyridoxal-phosphate-dependent aminotransferase family. LL-diaminopimelate aminotransferase subfamily. As to quaternary structure, homodimer. Pyridoxal 5'-phosphate serves as cofactor.

The enzyme catalyses (2S,6S)-2,6-diaminopimelate + 2-oxoglutarate = (S)-2,3,4,5-tetrahydrodipicolinate + L-glutamate + H2O + H(+). The protein operates within amino-acid biosynthesis; L-lysine biosynthesis via DAP pathway; LL-2,6-diaminopimelate from (S)-tetrahydrodipicolinate (aminotransferase route): step 1/1. Its function is as follows. Involved in the synthesis of meso-diaminopimelate (m-DAP or DL-DAP), required for both lysine and peptidoglycan biosynthesis. Catalyzes the direct conversion of tetrahydrodipicolinate to LL-diaminopimelate. This is LL-diaminopimelate aminotransferase from Syntrophotalea carbinolica (strain DSM 2380 / NBRC 103641 / GraBd1) (Pelobacter carbinolicus).